We begin with the raw amino-acid sequence, 247 residues long: NAD(P)H-quinone oxidoreductase subunit K, chloroplastic (247 aa).

4 residues coordinate [4Fe-4S] cluster: Cys-64, Cys-65, Cys-129, and Cys-160.

It belongs to the complex I 20 kDa subunit family. As to quaternary structure, NDH is composed of at least 16 different subunits, 5 of which are encoded in the nucleus. [4Fe-4S] cluster is required as a cofactor.

It localises to the plastid. The protein resides in the chloroplast thylakoid membrane. The enzyme catalyses a plastoquinone + NADH + (n+1) H(+)(in) = a plastoquinol + NAD(+) + n H(+)(out). It catalyses the reaction a plastoquinone + NADPH + (n+1) H(+)(in) = a plastoquinol + NADP(+) + n H(+)(out). Its function is as follows. NDH shuttles electrons from NAD(P)H:plastoquinone, via FMN and iron-sulfur (Fe-S) centers, to quinones in the photosynthetic chain and possibly in a chloroplast respiratory chain. The immediate electron acceptor for the enzyme in this species is believed to be plastoquinone. Couples the redox reaction to proton translocation, and thus conserves the redox energy in a proton gradient. This chain is NAD(P)H-quinone oxidoreductase subunit K, chloroplastic, found in Mesostigma viride (Green alga).